A 466-amino-acid polypeptide reads, in one-letter code: GTPase Der (466 aa).

EngA-type G domains follow at residues 30-193 and 203-376; these read PVVA…PEVS and RRVA…ASWD. GTP is bound by residues 36-43, 83-87, 145-148, 209-216, 256-260, and 321-324; these read GRPNVGKS, DTGGW, NKVD, GKPNVGKS, DTAGL, and NKWD. The KH-like domain occupies 377-459; sequence TRIATGPLNS…PIRINVRVRE (83 aa).

This sequence belongs to the TRAFAC class TrmE-Era-EngA-EngB-Septin-like GTPase superfamily. EngA (Der) GTPase family. As to quaternary structure, associates with the 50S ribosomal subunit.

In terms of biological role, GTPase that plays an essential role in the late steps of ribosome biogenesis. This chain is GTPase Der, found in Mycolicibacterium paratuberculosis (strain ATCC BAA-968 / K-10) (Mycobacterium paratuberculosis).